Reading from the N-terminus, the 37-residue chain is Cytochrome b6-f complex subunit 5 (37 aa).

The chain crosses the membrane as a helical span at residues 5-25 (LLSGIVLGLVPITLAGLFVTA).

This sequence belongs to the PetG family. The 4 large subunits of the cytochrome b6-f complex are cytochrome b6, subunit IV (17 kDa polypeptide, PetD), cytochrome f and the Rieske protein, while the 4 small subunits are PetG, PetL, PetM and PetN. The complex functions as a dimer.

It localises to the plastid. The protein resides in the chloroplast thylakoid membrane. Functionally, component of the cytochrome b6-f complex, which mediates electron transfer between photosystem II (PSII) and photosystem I (PSI), cyclic electron flow around PSI, and state transitions. PetG is required for either the stability or assembly of the cytochrome b6-f complex. The polypeptide is Cytochrome b6-f complex subunit 5 (Gnetum parvifolium (Small-leaved jointfir)).